The following is a 523-amino-acid chain: Sorting nexin-2 (523 aa).

The tract at residues 1–104 is disordered; it reads MAAEREPPPL…EPSPAVTPVT (104 aa). 2 stretches are compositionally biased toward low complexity: residues 27-48 and 93-104; these read LFTSTVSTLESSPSSPEPTSLP and SSEPSPAVTPVT. Residue serine 97 is modified to Phosphoserine. Phosphothreonine occurs at positions 101 and 104. Phosphoserine occurs at positions 117 and 119. The region spanning 140–269 is the PX domain; the sequence is FDIEIGVSDP…QFLESSELPR (130 aa). Residues arginine 183, serine 185, lysine 211, and arginine 235 each coordinate a 1,2-diacyl-sn-glycero-3-phospho-(1D-myo-inositol-3-phosphate). Serine 185 is subject to Phosphoserine. An interaction with RhoG region spans residues 260–523; that stretch reads QFLESSELPR…AFLPEAKAIA (264 aa). Serine 277 is subject to Phosphoserine. Residues 278–295 are membrane-binding amphipathic helix; the sequence is GAGILRMVNKAADAVNKM. Residues 299 to 523 form the BAR domain; that stretch reads MNESDAWFEE…AFLPEAKAIA (225 aa). Lysine 473 is modified (N6-acetyllysine).

This sequence belongs to the sorting nexin family. In terms of assembly, predominantly forms heterodimers with BAR domain-containing sorting nexins SNX5, SNX6 and SNX32; can self-associate to form homodimers. The heterodimers are proposed to self-assemble into helical arrays on the membrane to stabilize and expand local membrane curvature underlying endosomal tubule formation. Thought to be a component of the originally described retromer complex (also called SNX-BAR retromer) which is a pentamer containing the heterotrimeric retromer cargo-selective complex (CSC), also described as vacuolar protein sorting subcomplex (VPS), and a heterodimeric membrane-deforming subcomplex formed between SNX1 or SNX2 and SNX5 or SNX6 (also called SNX-BAR subcomplex); the respective CSC and SNX-BAR subcomplexes associate with low affinity. Interacts with SNX5, SNX6, SNX32, VPS26A, VPS29, VPS35, FNBP1, KALRN, RHOG (GDP-bound form).

Its subcellular location is the early endosome membrane. It localises to the cell projection. The protein resides in the lamellipodium. Involved in several stages of intracellular trafficking. Interacts with membranes containing phosphatidylinositol 3-phosphate (PtdIns(3P)) or phosphatidylinositol 3,5-bisphosphate (PtdIns(3,5)P2). Acts in part as component of the retromer membrane-deforming SNX-BAR subcomplex. The SNX-BAR retromer mediates retrograde transport of cargo proteins from endosomes to the trans-Golgi network (TGN) and is involved in endosome-to-plasma membrane transport for cargo protein recycling. The SNX-BAR subcomplex functions to deform the donor membrane into a tubular profile called endosome-to-TGN transport carrier (ETC). Can sense membrane curvature and has in vitro vesicle-to-membrane remodeling activity. Required for retrograde endosome-to-TGN transport of TGN38. Promotes KALRN- and RHOG-dependent but retromer-independent membrane remodeling such as lamellipodium formation; the function is dependent on GEF activity of KALRN. The chain is Sorting nexin-2 (SNX2) from Pongo abelii (Sumatran orangutan).